A 214-amino-acid polypeptide reads, in one-letter code: Holliday junction branch migration complex subunit RuvA (214 aa).

Positions 1-67 (MVGWLKGLIV…ADNWQFFGFK (67 aa)) are domain I. Positions 68–146 (STQERDIFRE…AFAGMDPAPS (79 aa)) are domain II. The segment at 147 to 154 (LAEGVSSE) is flexible linker. The tract at residues 155–214 (QMPESGADVEATLSMLGYDDLEVRRAIRAIAEGSDGPPPPGDDQDAWLRGCLQWLSRDSA) is domain III.

This sequence belongs to the RuvA family. As to quaternary structure, homotetramer. Forms an RuvA(8)-RuvB(12)-Holliday junction (HJ) complex. HJ DNA is sandwiched between 2 RuvA tetramers; dsDNA enters through RuvA and exits via RuvB. An RuvB hexamer assembles on each DNA strand where it exits the tetramer. Each RuvB hexamer is contacted by two RuvA subunits (via domain III) on 2 adjacent RuvB subunits; this complex drives branch migration. In the full resolvosome a probable DNA-RuvA(4)-RuvB(12)-RuvC(2) complex forms which resolves the HJ.

The protein localises to the cytoplasm. Functionally, the RuvA-RuvB-RuvC complex processes Holliday junction (HJ) DNA during genetic recombination and DNA repair, while the RuvA-RuvB complex plays an important role in the rescue of blocked DNA replication forks via replication fork reversal (RFR). RuvA specifically binds to HJ cruciform DNA, conferring on it an open structure. The RuvB hexamer acts as an ATP-dependent pump, pulling dsDNA into and through the RuvAB complex. HJ branch migration allows RuvC to scan DNA until it finds its consensus sequence, where it cleaves and resolves the cruciform DNA. The sequence is that of Holliday junction branch migration complex subunit RuvA from Synechococcus sp. (strain CC9605).